We begin with the raw amino-acid sequence, 494 residues long: Glycerol kinase (494 aa).

Thr13 serves as a coordination point for ADP. Residues Thr13, Thr14, and Ser15 each contribute to the ATP site. Thr13 is a binding site for sn-glycerol 3-phosphate. Residue Arg17 coordinates ADP. Sn-glycerol 3-phosphate-binding residues include Arg83, Glu84, Tyr135, and Asp244. Residues Arg83, Glu84, Tyr135, Asp244, and Gln245 each coordinate glycerol. Residues Thr266 and Gly309 each contribute to the ADP site. ATP-binding residues include Thr266, Gly309, Gln313, and Gly410. Gly410 and Asn414 together coordinate ADP.

It belongs to the FGGY kinase family.

It carries out the reaction glycerol + ATP = sn-glycerol 3-phosphate + ADP + H(+). Its pathway is polyol metabolism; glycerol degradation via glycerol kinase pathway; sn-glycerol 3-phosphate from glycerol: step 1/1. Its activity is regulated as follows. Inhibited by fructose 1,6-bisphosphate (FBP). Key enzyme in the regulation of glycerol uptake and metabolism. Catalyzes the phosphorylation of glycerol to yield sn-glycerol 3-phosphate. The sequence is that of Glycerol kinase from Shewanella baltica (strain OS223).